The following is a 398-amino-acid chain: Elongation factor Tu (398 aa).

The tr-type G domain occupies 10-207 (KPHVNIGTIG…TVDSYIPEPE (198 aa)). A G1 region spans residues 19-26 (GHVDHGKT). 19–26 (GHVDHGKT) is a binding site for GTP. Thr26 is a Mg(2+) binding site. Residues 63-67 (GITIN) are G2. The interval 84-87 (DAPG) is G3. GTP-binding positions include 84–88 (DAPGH) and 139–142 (NKVD). Positions 139–142 (NKVD) are G4. Positions 177–179 (SAL) are G5.

This sequence belongs to the TRAFAC class translation factor GTPase superfamily. Classic translation factor GTPase family. EF-Tu/EF-1A subfamily. As to quaternary structure, monomer.

Its subcellular location is the cytoplasm. It catalyses the reaction GTP + H2O = GDP + phosphate + H(+). In terms of biological role, GTP hydrolase that promotes the GTP-dependent binding of aminoacyl-tRNA to the A-site of ribosomes during protein biosynthesis. This is Elongation factor Tu from Streptococcus pyogenes serotype M28 (strain MGAS6180).